The sequence spans 696 residues: DNA ligase (696 aa).

Residues 55-59, 105-106, and Glu137 each bind NAD(+); these read DYEFD and SL. Catalysis depends on Lys139, which acts as the N6-AMP-lysine intermediate. NAD(+)-binding residues include Arg160, Glu194, Lys310, and Lys334. Residues Cys428, Cys431, Cys446, and Cys451 each coordinate Zn(2+). The BRCT domain occupies 615 to 696; that stretch reads NVNPNFVGKN…EFIELKDKFD (82 aa).

It belongs to the NAD-dependent DNA ligase family. LigA subfamily. Mg(2+) is required as a cofactor. Requires Mn(2+) as cofactor.

It catalyses the reaction NAD(+) + (deoxyribonucleotide)n-3'-hydroxyl + 5'-phospho-(deoxyribonucleotide)m = (deoxyribonucleotide)n+m + AMP + beta-nicotinamide D-nucleotide.. Its function is as follows. DNA ligase that catalyzes the formation of phosphodiester linkages between 5'-phosphoryl and 3'-hydroxyl groups in double-stranded DNA using NAD as a coenzyme and as the energy source for the reaction. It is essential for DNA replication and repair of damaged DNA. This chain is DNA ligase, found in Fusobacterium nucleatum subsp. nucleatum (strain ATCC 25586 / DSM 15643 / BCRC 10681 / CIP 101130 / JCM 8532 / KCTC 2640 / LMG 13131 / VPI 4355).